Here is a 77-residue protein sequence, read N- to C-terminus: Ras-related C3 botulinum toxin substrate 1 (77 aa).

22-24 contacts GTP; it reads KLD. K53 participates in a covalent cross-link: Glycyl lysine isopeptide (Lys-Gly) (interchain with G-Cter in ubiquitin). Residue 65-66 coordinates GTP; the sequence is AL.

Belongs to the small GTPase superfamily. Rho family. As to quaternary structure, interacts with NISCH. Interacts with PIP5K1A. Interacts with the GTP-bound form of RAB7A. Interacts with SRGAP2. Interacts with CYFIP1/SRA-1. Interacts with PLXNB3. Interacts with ARHGDIA; the interaction is induced by SEMA5A, mediated through PLXNB3 and inactivates and stabilizes RAC1. Interacts (GTP-bound form preferentially) with PKN2 (via the REM repeats); the interaction stimulates autophosphorylation and phosphorylation of PKN2. Interacts with the GEF proteins PREX1, RASGRF2, FARP1, FARP2, DOCK1, DOCK2 and DOCK7, which promote the exchange between GDP and GTP, and therefore activate it. Interacts with PARD6A, PARD6B and PARD6G in a GTP-dependent manner. Part of a quaternary complex containing PARD3, some PARD6 protein (PARD6A, PARD6B or PARD6G) and some atypical PKC protein (PRKCI or PRKCZ), which plays a central role in epithelial cell polarization. Found in a trimeric complex composed of DOCK1 and ELMO1, which plays a central role in phagocytosis of apoptotic cells. Interacts with RALBP1 via its effector domain. Interacts with PLXNB1. Part of a complex with MAP2K3, MAP3K3, CCM2 and DEF6. Interacts with BAIAP2, BAIAP2L1 and DEF6. Interacts with Y.pseudotuberculosis YPKA and PLCB2. Interacts with NOXA1. Interacts with ARHGEF2. Interacts with TBC1D2. Interacts with UNKL. Interacts with USP6. Interacts with SPATA13. Interacts with ARHGEF16; mediates activation of RAC1 by EPHA2. Interacts with ITGB4. Interacts with S100A8 and calprotectin (S100A8/9). Interacts with PACSIN2. Interacts (when active) with PPP5C (via TPR repeats); activates PPP5C phosphatase activity and translocates PPP5C to the cell membrane. Interacts with RAPH1 (via Ras associating and PH domains). Interacts with MTSS2 (via IMD domain); this interaction may be important to potentiate PDGF-induced RAC1 activation. Interacts with PAK2. Interacts (GTP-bound form) with SH3RF1 and SH3RF3. Found in a complex with SH3RF1, MAPK8IP1/JIP1, MAP3K11/MLK3, MAP2K7/MKK7 and MAPK8/JNK1. Interacts (both active GTP- or inactive GDP-bound forms) with SH3RF2. Interacts (GTP-bound form preferentially) with CYRIB. Interacts with DOCK4 (via DOCKER domain); functions as a guanine nucleotide exchange factor (GEF) for RAC1. Interacts with GARRE1. Interacts with RAP1GDS1. May interact with ARHGAP36. Interacts with DSG3; the interaction is required for DSG3 translocation to cell-cell junctions, organization of cortical F-actin bundles and actin anchoring at cell-cell junctions. Component of the phagocyte NADPH oxidase complex composed of an obligatory core heterodimer formed by the membrane proteins CYBA and CYBB and the cytosolic regulatory subunits NCF1/p47-phox, NCF2/p67-phox, NCF4/p40-phox and the small GTPase RAC1 or RAC2. Interacts with NCF2. Post-translationally, the N-terminus is blocked. GTP-bound active form is ubiquitinated by HACE1, leading to its degradation by the proteasome.

It localises to the cytoplasm. The protein localises to the membrane. It is found in the melanosome. Its subcellular location is the cell projection. The protein resides in the lamellipodium. It localises to the dendrite. The protein localises to the synapse. It is found in the nucleus. The enzyme catalyses GTP + H2O = GDP + phosphate + H(+). With respect to regulation, regulated by guanine nucleotide exchange factors (GEFs) which promote the exchange of bound GDP for free GTP, GTPase activating proteins (GAPs) which increase the GTP hydrolysis activity, and GDP dissociation inhibitors which inhibit the dissociation of the nucleotide from the GTPase. GTP hydrolysis is stimulated by ARHGAP30. In terms of biological role, plasma membrane-associated small GTPase which cycles between active GTP-bound and inactive GDP-bound states. In its active state, binds to a variety of effector proteins to regulate cellular responses such as secretory processes, phagocytosis of apoptotic cells, epithelial cell polarization, neurons adhesion, migration and differentiation, and growth-factor induced formation of membrane ruffles. Rac1 p21/rho GDI heterodimer is the active component of the cytosolic factor sigma 1, which is involved in stimulation of the NADPH oxidase activity in macrophages. Essential for the SPATA13-mediated regulation of cell migration and adhesion assembly and disassembly. Stimulates PKN2 kinase activity. In concert with RAB7A, plays a role in regulating the formation of RBs (ruffled borders) in osteoclasts. In podocytes, promotes nuclear shuttling of NR3C2; this modulation is required for a proper kidney functioning. Required for atypical chemokine receptor ACKR2-induced LIMK1-PAK1-dependent phosphorylation of cofilin (CFL1) and for up-regulation of ACKR2 from endosomal compartment to cell membrane, increasing its efficiency in chemokine uptake and degradation. In neurons, is involved in dendritic spine formation and synaptic plasticity. In hippocampal neurons, involved in spine morphogenesis and synapse formation, through local activation at synapses by guanine nucleotide exchange factors (GEFs), such as ARHGEF6/ARHGEF7/PIX. In synapses, seems to mediate the regulation of F-actin cluster formation performed by SHANK3. In neurons, plays a crucial role in regulating GABA(A) receptor synaptic stability and hence GABAergic inhibitory synaptic transmission through its role in PAK1 activation and eventually F-actin stabilization. Required for DSG3 translocation to cell-cell junctions, DSG3-mediated organization of cortical F-actin bundles and anchoring of actin at cell junctions; via interaction with DSG3. Subunit of the phagocyte NADPH oxidase complex that mediates the transfer of electrons from cytosolic NADPH to O2 to produce the superoxide anion (O2(-)). The protein is Ras-related C3 botulinum toxin substrate 1 of Cavia porcellus (Guinea pig).